The primary structure comprises 174 residues: Ubiquitin-fold modifier-conjugating enzyme 1 (174 aa).

Cys119 functions as the Glycyl thioester intermediate in the catalytic mechanism.

It belongs to the ubiquitin-conjugating enzyme family. UFC1 subfamily.

In terms of biological role, E2-like enzyme which forms an intermediate with UFM1 via a thioester linkage. The sequence is that of Ubiquitin-fold modifier-conjugating enzyme 1 from Arabidopsis thaliana (Mouse-ear cress).